The chain runs to 37 residues: Cytochrome b6-f complex subunit 5 (37 aa).

Residues 5–25 traverse the membrane as a helical segment; that stretch reads LLSGIILGLIPITICGLFFTA.

The protein belongs to the PetG family. As to quaternary structure, the 4 large subunits of the cytochrome b6-f complex are cytochrome b6, subunit IV (17 kDa polypeptide, PetD), cytochrome f and the Rieske protein, while the 4 small subunits are PetG, PetL, PetM and PetN. The complex functions as a dimer.

The protein localises to the plastid. It is found in the chloroplast thylakoid membrane. Its function is as follows. Component of the cytochrome b6-f complex, which mediates electron transfer between photosystem II (PSII) and photosystem I (PSI), cyclic electron flow around PSI, and state transitions. PetG is required for either the stability or assembly of the cytochrome b6-f complex. This Euglena gracilis protein is Cytochrome b6-f complex subunit 5.